The following is a 188-amino-acid chain: Trafficking protein particle complex subunit 5 (188 aa).

Ser10 is modified (phosphoserine).

The protein belongs to the TRAPP small subunits family. BET3 subfamily. As to quaternary structure, component of the multisubunit TRAPP (transport protein particle) complex, which includes at least TRAPPC2, TRAPPC2L, TRAPPC3, TRAPPC3L, TRAPPC4, TRAPPC5, TRAPPC8, TRAPPC9, TRAPPC10, TRAPPC11 and TRAPPC12.

It is found in the golgi apparatus. Its subcellular location is the cis-Golgi network. It localises to the endoplasmic reticulum. In terms of biological role, may play a role in vesicular transport from endoplasmic reticulum to Golgi. The protein is Trafficking protein particle complex subunit 5 (TRAPPC5) of Homo sapiens (Human).